Here is a 356-residue protein sequence, read N- to C-terminus: uncharacterized protein (356 aa).

This is an uncharacterized protein from Saccharolobus islandicus (Sulfolobus islandicus).